We begin with the raw amino-acid sequence, 273 residues long: Ribosomal RNA small subunit methyltransferase A (273 aa).

S-adenosyl-L-methionine contacts are provided by Asn19, Leu21, Gly46, Glu67, Asp92, and Asn113.

Belongs to the class I-like SAM-binding methyltransferase superfamily. rRNA adenine N(6)-methyltransferase family. RsmA subfamily.

It localises to the cytoplasm. It carries out the reaction adenosine(1518)/adenosine(1519) in 16S rRNA + 4 S-adenosyl-L-methionine = N(6)-dimethyladenosine(1518)/N(6)-dimethyladenosine(1519) in 16S rRNA + 4 S-adenosyl-L-homocysteine + 4 H(+). Its function is as follows. Specifically dimethylates two adjacent adenosines (A1518 and A1519) in the loop of a conserved hairpin near the 3'-end of 16S rRNA in the 30S particle. May play a critical role in biogenesis of 30S subunits. The protein is Ribosomal RNA small subunit methyltransferase A of Hahella chejuensis (strain KCTC 2396).